A 130-amino-acid polypeptide reads, in one-letter code: Small ribosomal subunit protein uS9 (130 aa).

The interval 107–130 is disordered; that stretch reads DSREVERKKVGLRKARRRPQFSKR. Positions 116–130 are enriched in basic residues; the sequence is VGLRKARRRPQFSKR.

It belongs to the universal ribosomal protein uS9 family.

The polypeptide is Small ribosomal subunit protein uS9 (Marinomonas sp. (strain MWYL1)).